The primary structure comprises 464 residues: Antithrombin-III (464 aa).

The N-terminal stretch at methionine 1–cysteine 32 is a signal peptide. Intrachain disulfides connect cysteine 40-cysteine 160 and cysteine 53-cysteine 127. Threonine 63 is modified (phosphothreonine; by FAM20C). Serine 68 bears the Phosphoserine; by FAM20C mark. Tryptophan 81 contacts heparin. Asparagine 128 carries an N-linked (GlcNAc...) asparagine glycan. Arginine 161 serves as a coordination point for heparin. Asparagine 167 carries an N-linked (GlcNAc...) asparagine glycan. Position 177 (arginine 177) interacts with heparin. N-linked (GlcNAc...) (complex) asparagine glycosylation occurs at asparagine 187. The N-linked (GlcNAc...) asparagine glycan is linked to asparagine 224. Cysteines 279 and 462 form a disulfide.

Belongs to the serpin family. Forms protease inhibiting heterodimer with TMPRSS7. In terms of processing, phosphorylated by FAM20C in the extracellular medium. As to expression, found in plasma.

It localises to the secreted. The protein resides in the extracellular space. Most important serine protease inhibitor in plasma that regulates the blood coagulation cascade. AT-III inhibits thrombin, matriptase-3/TMPRSS7, as well as factors IXa, Xa and XIa. Its inhibitory activity is greatly enhanced in the presence of heparin. The polypeptide is Antithrombin-III (SERPINC1) (Homo sapiens (Human)).